The primary structure comprises 130 residues: Small ribosomal subunit protein uS9 (130 aa).

The interval 109 to 130 (RAKERKKYGLKAARRAPQFSKR) is disordered. The span at 111–130 (KERKKYGLKAARRAPQFSKR) shows a compositional bias: basic residues.

The protein belongs to the universal ribosomal protein uS9 family.

The polypeptide is Small ribosomal subunit protein uS9 (Heliobacterium modesticaldum (strain ATCC 51547 / Ice1)).